Reading from the N-terminus, the 51-residue chain is Large ribosomal subunit protein bL33 (51 aa).

This sequence belongs to the bacterial ribosomal protein bL33 family.

The chain is Large ribosomal subunit protein bL33 from Psychrobacter arcticus (strain DSM 17307 / VKM B-2377 / 273-4).